Reading from the N-terminus, the 353-residue chain is Methylthioribose-1-phosphate isomerase (353 aa).

The Proton donor role is filled by D241.

It belongs to the eIF-2B alpha/beta/delta subunits family. MtnA subfamily.

Its subcellular location is the cytoplasm. It localises to the nucleus. The catalysed reaction is 5-(methylsulfanyl)-alpha-D-ribose 1-phosphate = 5-(methylsulfanyl)-D-ribulose 1-phosphate. Its pathway is amino-acid biosynthesis; L-methionine biosynthesis via salvage pathway; L-methionine from S-methyl-5-thio-alpha-D-ribose 1-phosphate: step 1/6. Catalyzes the interconversion of methylthioribose-1-phosphate (MTR-1-P) into methylthioribulose-1-phosphate (MTRu-1-P). The chain is Methylthioribose-1-phosphate isomerase (mri1) from Danio rerio (Zebrafish).